The chain runs to 364 residues: Chorismate synthase (364 aa).

NADP(+) is bound at residue Arg-47. Residues Arg-125–Ser-127, Gly-285, Lys-300–Ser-304, and Arg-327 each bind FMN.

The protein belongs to the chorismate synthase family. As to quaternary structure, homotetramer. FMNH2 is required as a cofactor.

The catalysed reaction is 5-O-(1-carboxyvinyl)-3-phosphoshikimate = chorismate + phosphate. Its pathway is metabolic intermediate biosynthesis; chorismate biosynthesis; chorismate from D-erythrose 4-phosphate and phosphoenolpyruvate: step 7/7. Functionally, catalyzes the anti-1,4-elimination of the C-3 phosphate and the C-6 proR hydrogen from 5-enolpyruvylshikimate-3-phosphate (EPSP) to yield chorismate, which is the branch point compound that serves as the starting substrate for the three terminal pathways of aromatic amino acid biosynthesis. This reaction introduces a second double bond into the aromatic ring system. The chain is Chorismate synthase from Dehalococcoides mccartyi (strain ATCC BAA-2100 / JCM 16839 / KCTC 5957 / BAV1).